The chain runs to 835 residues: Protein translocase subunit SecA 1 (835 aa).

Residues Gln-85, 103-107, and Asp-492 each bind ATP; that span reads GEGKT. Positions 788 to 807 are disordered; it reads VQGEAVHPSSDGEEAKKKPV. Residues Cys-819, Cys-821, Cys-830, and Cys-831 each coordinate Zn(2+).

Belongs to the SecA family. Monomer and homodimer. Part of the essential Sec protein translocation apparatus which comprises SecA, SecYEG and auxiliary proteins SecDF. Other proteins may also be involved. It depends on Zn(2+) as a cofactor.

The protein localises to the cell membrane. Its subcellular location is the cytoplasm. It carries out the reaction ATP + H2O + cellular proteinSide 1 = ADP + phosphate + cellular proteinSide 2.. Functionally, part of the Sec protein translocase complex. Interacts with the SecYEG preprotein conducting channel. Has a central role in coupling the hydrolysis of ATP to the transfer of proteins into and across the cell membrane, serving as an ATP-driven molecular motor driving the stepwise translocation of polypeptide chains across the membrane. The protein is Protein translocase subunit SecA 1 of Bacillus thuringiensis (strain Al Hakam).